Consider the following 985-residue polypeptide: Bifunctional glutamine synthetase adenylyltransferase/adenylyl-removing enzyme (985 aa).

The tract at residues 1 to 472 (MTSSAPGNAD…HYARLFEGDP (472 aa)) is adenylyl removase. Residues 477–985 (SLPPVNYGAG…RRVFTSLLEE (509 aa)) form an adenylyl transferase region.

The protein belongs to the GlnE family. Mg(2+) serves as cofactor.

It carries out the reaction [glutamine synthetase]-O(4)-(5'-adenylyl)-L-tyrosine + phosphate = [glutamine synthetase]-L-tyrosine + ADP. The catalysed reaction is [glutamine synthetase]-L-tyrosine + ATP = [glutamine synthetase]-O(4)-(5'-adenylyl)-L-tyrosine + diphosphate. In terms of biological role, involved in the regulation of glutamine synthetase GlnA, a key enzyme in the process to assimilate ammonia. When cellular nitrogen levels are high, the C-terminal adenylyl transferase (AT) inactivates GlnA by covalent transfer of an adenylyl group from ATP to specific tyrosine residue of GlnA, thus reducing its activity. Conversely, when nitrogen levels are low, the N-terminal adenylyl removase (AR) activates GlnA by removing the adenylyl group by phosphorolysis, increasing its activity. The regulatory region of GlnE binds the signal transduction protein PII (GlnB) which indicates the nitrogen status of the cell. The polypeptide is Bifunctional glutamine synthetase adenylyltransferase/adenylyl-removing enzyme (Bradyrhizobium sp. (strain BTAi1 / ATCC BAA-1182)).